Here is a 184-residue protein sequence, read N- to C-terminus: Cyclin-dependent kinase inhibitor 1 (184 aa).

Positions 85–98 (ISSTTLTPLSSPST) are enriched in low complexity. The tract at residues 85-184 (ISSTTLTPLS…IRTRSSCSPY (100 aa)) is disordered.

It belongs to the CDI family. In terms of assembly, interacts with cyd-1; the interaction is direct. In terms of tissue distribution, in embryos, expression is first seen in pharyngeal primordium and later in all differentiating cells. Post embryonic expression corresponds to developmental patterns of cell cycle progression in many tissues including sex myoblasts, distal tip cells, vulval cells, seam cells, neurons, intestine cells and hypodermal cells.

Its subcellular location is the nucleus. Negative cell-cycle regulator that functions at the G1-to-S-phase transition. Required for suspension of the cell cycle in dauer larvae and starved L1 larvae. In vulval precursor cells (VPCs), a pathway of heterochronic genes acts via cki-1 to maintain VPCs in G1 during the L2 larval stage. Cul-2 may function in ubiquitin-mediated degradation by targeting cki-1 for degradation. Involved in distal tip cell development by repressing and modulating cye-1/cdk-2 activity levels in Z1.aa/Z4.pp and in Z1.ap/Z4.pa. In Caenorhabditis elegans, this protein is Cyclin-dependent kinase inhibitor 1.